The chain runs to 111 residues: Small ribosomal subunit protein uS15c (111 aa).

The protein belongs to the universal ribosomal protein uS15 family. Part of the 30S ribosomal subunit.

It is found in the plastid. It localises to the chloroplast. The sequence is that of Small ribosomal subunit protein uS15c (rps15) from Staurastrum punctulatum (Green alga).